Reading from the N-terminus, the 95-residue chain is Gas vesicle protein S (95 aa).

It belongs to the gas vesicle GvpA family.

Its subcellular location is the gas vesicle. Its function is as follows. Probably a minor component of the gas vesicle. It is not clear what function gas vesicles perform in soil bacteria. When a minimal gvp locus (gvpA2-gvpR-gvpN-gvpF-gvpG-gvpL-gvpS-gvpK-gvpJ-gvpT-gvpU, called pNL29) is expressed in E.coli gas vesicles are made. The protein is Gas vesicle protein S of Priestia megaterium (Bacillus megaterium).